Reading from the N-terminus, the 337-residue chain is tRNA N6-adenosine threonylcarbamoyltransferase (337 aa).

Fe cation is bound by residues His-111 and His-115. Substrate-binding positions include 134-138, Asp-167, Gly-180, and Asn-272; that span reads LVSGG. Asp-300 serves as a coordination point for Fe cation.

This sequence belongs to the KAE1 / TsaD family. It depends on Fe(2+) as a cofactor.

It is found in the cytoplasm. It carries out the reaction L-threonylcarbamoyladenylate + adenosine(37) in tRNA = N(6)-L-threonylcarbamoyladenosine(37) in tRNA + AMP + H(+). Required for the formation of a threonylcarbamoyl group on adenosine at position 37 (t(6)A37) in tRNAs that read codons beginning with adenine. Is involved in the transfer of the threonylcarbamoyl moiety of threonylcarbamoyl-AMP (TC-AMP) to the N6 group of A37, together with TsaE and TsaB. TsaD likely plays a direct catalytic role in this reaction. In Salmonella arizonae (strain ATCC BAA-731 / CDC346-86 / RSK2980), this protein is tRNA N6-adenosine threonylcarbamoyltransferase.